The primary structure comprises 311 residues: MRFKYVASKYSCVTQTQTQLIDGTEVAASIRSDLISSVTRIVNTGTTPQLATVLMNDDPASQTYVSMKHDDCEEVGIATRDITIDPEAPAAELFDTVDELNADSSVHGILVQMPLPDHVDEREVLRRIDPKKDVDGFHPENVGRLVAGQPRYKPCTPHGIQKLLIAADIETEGANAVVIGRSNIVGKPMANLLIQKADAGNATVTTCHSRTNNLASKTRDADIIIAAAGVPEMIDGDMISTGTVVIDVGINRVETENGSELVGDVEFESAAKKADAITPVPGGVGPMTRAMLLWNTVKATAIATDTSIELP.

NADP(+) is bound by residues 180–182 (GRS), serine 209, and isoleucine 250.

It belongs to the tetrahydrofolate dehydrogenase/cyclohydrolase family. As to quaternary structure, homodimer.

The catalysed reaction is (6R)-5,10-methylene-5,6,7,8-tetrahydrofolate + NADP(+) = (6R)-5,10-methenyltetrahydrofolate + NADPH. It catalyses the reaction (6R)-5,10-methenyltetrahydrofolate + H2O = (6R)-10-formyltetrahydrofolate + H(+). The protein operates within one-carbon metabolism; tetrahydrofolate interconversion. Catalyzes the oxidation of 5,10-methylenetetrahydrofolate to 5,10-methenyltetrahydrofolate and then the hydrolysis of 5,10-methenyltetrahydrofolate to 10-formyltetrahydrofolate. This Haloquadratum walsbyi (strain DSM 16790 / HBSQ001) protein is Bifunctional protein FolD.